A 444-amino-acid chain; its full sequence is C4-dicarboxylate transport protein (444 aa).

A run of 9 helical transmembrane segments spans residues 15 to 35 (VIVAICIGIALGHYYPQFGVA), 46 to 66 (LIKMIIAPIIFCTVVSGIAGM), 78 to 98 (YALLYFEIVSTIALLVGLIVV), 143 to 163 (IVGAFATGDILQVLMFSVIFG), 199 to 219 (PIGAFGAMAFTIGAYGVGSLV), 224 to 244 (LMICFYITCLAFILIVLGGIA), 291 to 311 (VVGLVIPTGYSFNLDGTAIYL), 332 to 352 (ITLLVVLLLSSKGAAGVTGSG), and 354 to 374 (IVLAATLSAVGHLPVAGLALI). The disordered stretch occupies residues 422-444 (GIADTRPEDDLGVAEGPTPSNVK).

It belongs to the dicarboxylate/amino acid:cation symporter (DAACS) (TC 2.A.23) family.

The protein localises to the cell inner membrane. In terms of biological role, responsible for the transport of dicarboxylates such as succinate, fumarate, and malate from the periplasm across the membrane. The polypeptide is C4-dicarboxylate transport protein (Pseudomonas fluorescens (strain Pf0-1)).